Consider the following 355-residue polypeptide: Erythronate-4-phosphate dehydrogenase (355 aa).

Positions 45 and 66 each coordinate substrate. An NAD(+)-binding site is contributed by aspartate 146. Arginine 206 is a catalytic residue. Residue aspartate 229 coordinates NAD(+). The active site involves glutamate 234. Residue histidine 251 is the Proton donor of the active site. Glycine 254 lines the NAD(+) pocket. Tyrosine 255 is a substrate binding site.

The protein belongs to the D-isomer specific 2-hydroxyacid dehydrogenase family. PdxB subfamily. In terms of assembly, homodimer.

The protein localises to the cytoplasm. The catalysed reaction is 4-phospho-D-erythronate + NAD(+) = (R)-3-hydroxy-2-oxo-4-phosphooxybutanoate + NADH + H(+). It functions in the pathway cofactor biosynthesis; pyridoxine 5'-phosphate biosynthesis; pyridoxine 5'-phosphate from D-erythrose 4-phosphate: step 2/5. In terms of biological role, catalyzes the oxidation of erythronate-4-phosphate to 3-hydroxy-2-oxo-4-phosphonooxybutanoate. The protein is Erythronate-4-phosphate dehydrogenase of Acinetobacter baylyi (strain ATCC 33305 / BD413 / ADP1).